A 59-amino-acid chain; its full sequence is Conotoxin Bu1.2 (59 aa).

An N-terminal signal peptide occupies residues 1–16; the sequence is MFTVFLLVVLATTVVS. The propeptide occupies 17-42; the sequence is FSTDDESDGSNEEPSADQAARSAMNR. The disordered stretch occupies residues 18–43; sequence STDDESDGSNEEPSADQAARSAMNRP. The span at 19–31 shows a compositional bias: acidic residues; sequence TDDESDGSNEEPS. 2 disulfides stabilise this stretch: C46–C52 and C47–C57. Residue G58 is modified to Glycine amide.

It belongs to the conotoxin A superfamily. Expressed by the venom duct.

It is found in the secreted. The sequence is that of Conotoxin Bu1.2 from Conus bullatus (Bubble cone).